Here is a 3101-residue protein sequence, read N- to C-terminus: Probable polyketide synthase 32 (3101 aa).

A Ketosynthase family 3 (KS3) domain is found at 27–465 (SGDVAVIGIG…GSNVCLILSE (439 aa)). Active-site for beta-ketoacyl synthase activity residues include cysteine 199, histidine 338, and histidine 388. An acyl/malonyl transferase region spans residues 664-697 (GVSADIIIGHSLGEVSSAYCSGMIDFETLCYLTY). Residue serine 674 is the For acyl/malonyl transferase activity of the active site. The tract at residues 965-1087 (GPSINNLGNN…GNFSLTKHNS (123 aa)) is N-terminal hotdog fold. The region spanning 965–1287 (GPSINNLGNN…CTLVSLPNPE (323 aa)) is the PKS/mFAS DH domain. Catalysis depends on histidine 999, which acts as the Proton acceptor; for dehydratase activity. Positions 1104 to 1287 (NFTSISKQDL…CTLVSLPNPE (184 aa)) are C-terminal hotdog fold. The Proton donor; for dehydratase activity role is filled by aspartate 1176. The segment at 1209–1236 (KNGNNNDDDEESNNNNNNNNNNNNNNNN) is disordered. Residues 1221–1236 (NNNNNNNNNNNNNNNN) are compositionally biased toward low complexity. One can recognise a Carrier domain in the interval 2550 to 2627 (DNNEIIRSTI…QSIEIIKSAN (78 aa)). Serine 2587 is modified (O-(pantetheine 4'-phosphoryl)serine). The tract at residues 2627-2648 (NNKNNKNNNNNNNNKTNKNNNN) is disordered.

Pantetheine 4'-phosphate serves as cofactor.

Functionally, probable polyketide synthase. This chain is Probable polyketide synthase 32 (pks32), found in Dictyostelium discoideum (Social amoeba).